Here is a 387-residue protein sequence, read N- to C-terminus: 3-ketoacyl-CoA thiolase (387 aa).

C91 (acyl-thioester intermediate) is an active-site residue. Active-site proton acceptor residues include H343 and C373.

The protein belongs to the thiolase-like superfamily. Thiolase family. As to quaternary structure, heterotetramer of two alpha chains (FadB) and two beta chains (FadA).

It is found in the cytoplasm. It catalyses the reaction an acyl-CoA + acetyl-CoA = a 3-oxoacyl-CoA + CoA. Its pathway is lipid metabolism; fatty acid beta-oxidation. In terms of biological role, catalyzes the final step of fatty acid oxidation in which acetyl-CoA is released and the CoA ester of a fatty acid two carbons shorter is formed. The sequence is that of 3-ketoacyl-CoA thiolase from Vibrio cholerae serotype O1 (strain ATCC 39315 / El Tor Inaba N16961).